The sequence spans 433 residues: uncharacterized protein (433 aa).

The Radical SAM core domain maps to 104–349; sequence ERGRNIIQVR…ELEYKKKGIE (246 aa). [4Fe-4S] cluster contacts are provided by Cys118, Cys122, and Cys125. S-adenosyl-L-methionine is bound by residues 171 to 172 and 236 to 238; these read GE and MLS. The region spanning 370–433 is the TRAM domain; sequence PFKVGEVTKV…KDNIIVAELV (64 aa).

It belongs to the radical SAM superfamily. [4Fe-4S] cluster is required as a cofactor.

This is an uncharacterized protein from Methanocaldococcus jannaschii (strain ATCC 43067 / DSM 2661 / JAL-1 / JCM 10045 / NBRC 100440) (Methanococcus jannaschii).